The primary structure comprises 221 residues: Glutathione S-transferase A3 (221 aa).

Ala2 is modified (N-acetylalanine). Positions 3-83 (GKPVLHYFDG…YIASKYNLYG (81 aa)) constitute a GST N-terminal domain. Position 4 is an N6-succinyllysine (Lys4). Glutathione-binding positions include Tyr9, Arg45, 54–55 (QV), and 67–68 (QT). Residues 85-207 (DMKERAIIDM…LQPGSQRKPF (123 aa)) form the GST C-terminal domain.

Homodimer.

It is found in the cytoplasm. The enzyme catalyses RX + glutathione = an S-substituted glutathione + a halide anion + H(+). It catalyses the reaction androst-5-ene-3,17-dione = androst-4-ene-3,17-dione. It carries out the reaction pregn-5-ene-3,20-dione = progesterone. In terms of biological role, conjugation of reduced glutathione to a wide number of exogenous and endogenous hydrophobic electrophiles. Catalyzes isomerization reactions that contribute to the biosynthesis of steroid hormones. Efficiently catalyze obligatory double-bond isomerizations of delta(5)-androstene-3,17-dione and delta(5)-pregnene-3,20-dione, precursors to testosterone and progesterone, respectively. Has a high catalytic activity for aflatoxin B1-8,9 epoxide. This is Glutathione S-transferase A3 from Mus musculus (Mouse).